Here is a 169-residue protein sequence, read N- to C-terminus: Ribosome maturation factor RimM (169 aa).

One can recognise a PRC barrel domain in the interval 94–167 (ENEFYFHEII…KITIEVMEGL (74 aa)).

Belongs to the RimM family. In terms of assembly, binds ribosomal protein uS19.

It is found in the cytoplasm. Functionally, an accessory protein needed during the final step in the assembly of 30S ribosomal subunit, possibly for assembly of the head region. Essential for efficient processing of 16S rRNA. May be needed both before and after RbfA during the maturation of 16S rRNA. It has affinity for free ribosomal 30S subunits but not for 70S ribosomes. The chain is Ribosome maturation factor RimM from Listeria welshimeri serovar 6b (strain ATCC 35897 / DSM 20650 / CCUG 15529 / CIP 8149 / NCTC 11857 / SLCC 5334 / V8).